The following is a 294-amino-acid chain: 4-hydroxy-tetrahydrodipicolinate synthase (294 aa).

Threonine 44 is a pyruvate binding site. Tyrosine 132 acts as the Proton donor/acceptor in catalysis. Lysine 161 (schiff-base intermediate with substrate) is an active-site residue. Isoleucine 206 is a pyruvate binding site.

It belongs to the DapA family. Homotetramer; dimer of dimers.

It localises to the cytoplasm. The enzyme catalyses L-aspartate 4-semialdehyde + pyruvate = (2S,4S)-4-hydroxy-2,3,4,5-tetrahydrodipicolinate + H2O + H(+). The protein operates within amino-acid biosynthesis; L-lysine biosynthesis via DAP pathway; (S)-tetrahydrodipicolinate from L-aspartate: step 3/4. Catalyzes the condensation of (S)-aspartate-beta-semialdehyde [(S)-ASA] and pyruvate to 4-hydroxy-tetrahydrodipicolinate (HTPA). The sequence is that of 4-hydroxy-tetrahydrodipicolinate synthase from Thermotoga sp. (strain RQ2).